Consider the following 849-residue polypeptide: Putative respiratory burst oxidase homolog protein G (849 aa).

The span at 1–17 shows a compositional bias: basic and acidic residues; that stretch reads MQRVSFEVKDTEAEKSS. Residues 1–53 form a disordered region; it reads MQRVSFEVKDTEAEKSSSEILSGSLPSTYRNPAMENVGNAVDDGSSVKNNPKL. Topologically, residues 1–303 are cytoplasmic; sequence MQRVSFEVKD…RFFVLDSWQR (303 aa). Residues 18-27 are compositionally biased toward low complexity; it reads SEILSGSLPS. 2 EF-hand-like regions span residues 118–128 and 153–164; these read TANTDGLLLRS and SHLKGDVITETE. 2 consecutive EF-hand domains span residues 176–211 and 220–255; these read SFDSRLITFFDLMDKDSDGRLTEDEVREIIKLSSSA and KADEYAAMIMEELDPDHMGYIMMESLKKLLLQAETK. Positions 189, 191, 193, 195, and 200 each coordinate Ca(2+). A Phosphoserine modification is found at serine 270. The helical transmembrane segment at 304-324 threads the bilayer; the sequence is VWVIALWLTIMAILFAYKYIQ. Residues 325 to 392 lie on the Extracellular side of the membrane; sequence YKNRAVYEVL…LNFHKVIAVG (68 aa). The 161-residue stretch at 342–502 folds into the Ferric oxidoreductase domain; the sequence is KGAAETLKLN…LFVIVYILLV (161 aa). Residues 393 to 409 form a helical membrane-spanning segment; sequence IAIGVAIHSVSHLACDF. Residues 410–444 are Cytoplasmic-facing; sequence PLLIAATPAEYMPLGKFFGEEQPKRYLHFVKSTEG. The chain crosses the membrane as a helical span at residues 445-465; sequence ITGLVMVFLMVIAFTLAMPWF. Residues 466 to 489 lie on the Extracellular side of the membrane; that stretch reads RRGKLEKKLPGPLKKLASFNAFWY. The chain crosses the membrane as a helical span at residues 490-510; it reads THHLFVIVYILLVLHGYYIYL. Topologically, residues 511–518 are cytoplasmic; sequence NKEWYKKT. A helical transmembrane segment spans residues 519–536; the sequence is TWMYLAVPVALYAYERLI. Topologically, residues 537–659 are extracellular; it reads RAFRSSIRTV…PYGAPAQDYK (123 aa). Residues 541-657 form the FAD-binding FR-type domain; the sequence is SSIRTVKVLK…DGPYGAPAQD (117 aa). The helical transmembrane segment at 660–680 threads the bilayer; it reads KYEVVLLIGLGIGATPMISII. Residues 681–849 are Cytoplasmic-facing; it reads KDIINNTETK…TRFSFHKENF (169 aa).

Belongs to the RBOH (TC 5.B.1.3) family. Monomer and homodimer.

It localises to the membrane. Its function is as follows. Calcium-dependent NADPH oxidase that generates superoxide. This Arabidopsis thaliana (Mouse-ear cress) protein is Putative respiratory burst oxidase homolog protein G (RBOHG).